The primary structure comprises 347 residues: Ileal sodium/bile acid cotransporter (347 aa).

Topologically, residues 1–29 are extracellular; the sequence is MSNLTVGCLANATVCEGASCVAPESNFNA. N-linked (GlcNAc...) asparagine glycans are attached at residues Asn3 and Asn11. A helical transmembrane segment spans residues 30 to 50; the sequence is ILSVVLSTVLTILLALVMFSM. Over 51-83 the chain is Cytoplasmic; sequence GCNVEIKKFLGHIRRPWGIFIGFLCQFGIMPLT. The chain crosses the membrane as a helical span at residues 84-104; sequence GFVLAVAFGIMPIQAVVVLIM. Residues 105–127 are Extracellular-facing; it reads GCCPGGTASNILAYWVDGDMDLS. The helical transmembrane segment at 128–148 threads the bilayer; the sequence is VSMTTCSTLLALGMMPLCLYV. Residues 149–158 lie on the Cytoplasmic side of the membrane; the sequence is YTKMWVDSGT. A helical transmembrane segment spans residues 159 to 179; sequence IVIPYDNIGTSLVALVVPVSI. At 180–196 the chain is on the extracellular side; it reads GMFVNHKWPQKAKIILK. Residues 197–217 form a helical membrane-spanning segment; sequence VGSIAGAVLIVLIAVVGGILY. Residues 218 to 225 are Cytoplasmic-facing; the sequence is QSAWIIEP. Residues 226-246 traverse the membrane as a helical segment; sequence KLWIIGTIFPMAGYSLGFFLA. The Extracellular portion of the chain corresponds to 247-289; sequence RIAGQPWYRCRTVALETGMQNTQLCSTIVQLSFSPEDLTYVFT. The helical transmembrane segment at 290–310 threads the bilayer; sequence FPLIYSIFQIAFAAIFLGIYV. Residues 311 to 347 lie on the Cytoplasmic side of the membrane; it reads AYRKCHGKNDAEFPDIKDTKTEPESSFHQMNGGFQPE. Residues 323–335 are compositionally biased toward basic and acidic residues; that stretch reads FPDIKDTKTEPES. Residues 323 to 347 form a disordered region; that stretch reads FPDIKDTKTEPESSFHQMNGGFQPE. Position 336 is a phosphoserine (Ser336).

The protein belongs to the bile acid:sodium symporter (BASS) (TC 2.A.28) family. As to quaternary structure, monomer and homodimer.

Its subcellular location is the membrane. The enzyme catalyses taurocholate(out) + 2 Na(+)(out) = taurocholate(in) + 2 Na(+)(in). It catalyses the reaction cholate(out) + 2 Na(+)(out) = cholate(in) + 2 Na(+)(in). It carries out the reaction taurochenodeoxycholate(out) + 2 Na(+)(out) = taurochenodeoxycholate(in) + 2 Na(+)(in). The catalysed reaction is tauroursodeoxycholate(out) + 2 Na(+)(out) = tauroursodeoxycholate(in) + 2 Na(+)(in). The enzyme catalyses glycocholate(out) + 2 Na(+)(out) = glycocholate(in) + 2 Na(+)(in). It catalyses the reaction tauronorcholate(out) + 2 Na(+)(out) = tauronorcholate(in) + 2 Na(+)(in). It carries out the reaction tauroallocholate(out) + 2 Na(+)(out) = tauroallocholate(in) + 2 Na(+)(in). The catalysed reaction is taurodeoxycholate(out) + 2 Na(+)(out) = taurodeoxycholate(in) + 2 Na(+)(in). The enzyme catalyses tauro-beta-muricholate(out) + 2 Na(+)(out) = tauro-beta-muricholate(in) + 2 Na(+)(in). Functionally, plays a critical role in the sodium-dependent reabsorption of bile acids from the lumen of the small intestine. Transports various bile acids, unconjugated or conjugated, such as cholate and taurocholate. Also responsible for bile acid transport in the renal proximal tubules, a salvage mechanism that helps conserve bile acids. Works collaboratively with the Na(+)-taurocholate cotransporting polypeptide (NTCP), the organic solute transporter (OST), and the bile salt export pump (BSEP), to ensure efficacious biological recycling of bile acids during enterohepatic circulation. The sequence is that of Ileal sodium/bile acid cotransporter (SLC10A2) from Oryctolagus cuniculus (Rabbit).